A 377-amino-acid polypeptide reads, in one-letter code: Actin-related protein T2 (377 aa).

The protein belongs to the actin family.

Its subcellular location is the cytoplasm. It is found in the cytoskeleton. The polypeptide is Actin-related protein T2 (ACTRT2) (Bos taurus (Bovine)).